A 363-amino-acid chain; its full sequence is Ribonuclease P protein subunit p40 (363 aa).

In terms of assembly, component of nuclear RNase P and RNase MRP ribonucleoproteins. RNase P consists of a catalytic RNA moiety and about 10 protein subunits; POP1, POP4, POP5, POP7, RPP14, RPP21, RPP25, RPP30, RPP38 and RPP40. Within the RNase P complex, POP1, POP7 and RPP25 form the 'finger' subcomplex, POP5, RPP14, RPP40 and homodimeric RPP30 form the 'palm' subcomplex, and RPP21, POP4 and RPP38 form the 'wrist' subcomplex. All subunits of the RNase P complex interact with the catalytic RNA. Several subunits of RNase P are also part of the RNase MRP complex. RNase MRP consists of a catalytic RNA moiety and about 8 protein subunits; POP1, POP7, RPP25, RPP30, RPP38, RPP40 and possibly also POP4 and POP5.

It is found in the nucleus. The protein resides in the nucleolus. Functionally, component of ribonuclease P, a ribonucleoprotein complex that generates mature tRNA molecules by cleaving their 5'-ends. Also a component of the MRP ribonuclease complex, which cleaves pre-rRNA sequences. The polypeptide is Ribonuclease P protein subunit p40 (Rpp40) (Mus musculus (Mouse)).